Here is a 231-residue protein sequence, read N- to C-terminus: Eukaryotic translation initiation factor 4E allele Eva1 (231 aa).

Over residues 1-20 (MAAAEMERTTSFDAAEKLKA) the composition is skewed to basic and acidic residues. Positions 1 to 34 (MAAAEMERTTSFDAAEKLKAADAGGGEVDDELEE) are disordered. 2 EIF4G-binding regions span residues 56-59 (HPLE) and 66-102 (FDNP…NNIH). MRNA-binding positions include 74–79 (RQIDWG), Lys-106, and 124–125 (WE). A disulfide bridge connects residues Cys-129 and Cys-167. The segment at 150-159 (YTLLAMIGHQ) is EIF4G-binding. MRNA is bound by residues 174–179 (RVKGEK) and 219–223 (KRLDR).

The protein belongs to the eukaryotic initiation factor 4E family. As to quaternary structure, EIF4F is a multi-subunit complex, the composition of which varies with external and internal environmental conditions. It is composed of at least EIF4A, EIF4E and EIF4G. EIF4E is also known to interact with other partners. In higher plants two isoforms of EIF4F have been identified, named isoform EIF4F and isoform EIF(iso)4F. Isoform EIF4F has subunits p220 and p26, whereas isoform EIF(iso)4F has subunits p82 and p28. In terms of assembly, (Microbial infection) Interacts with potyvirus viral genome-linked protein (VPg); this interaction is possible in susceptible hosts but impaired in resistant plants. Post-translationally, according to the redox status, the Cys-129-Cys-167 disulfide bridge may have a role in regulating protein function by affecting its ability to bind capped mRNA.

Its subcellular location is the nucleus. The protein localises to the cytoplasm. Functionally, component of the protein complex eIF4F, which is involved in the recognition of the mRNA cap, ATP-dependent unwinding of 5'-terminal secondary structure and recruitment of mRNA to the ribosome. Recognizes and binds the 7-methylguanosine-containing mRNA cap during an early step in the initiation of protein synthesis and facilitates ribosome binding by inducing the unwinding of the mRNAs secondary structures. Key component of recessive resistance to potyviruses. In terms of biological role, (Microbial infection) Susceptibility host factor required for viral infection (e.g. Potato virus Y (PVY)) by recruiting viral RNAs to the host ribosomal complex via an interaction with viral genome-linked protein (VPg). Displayed sequence is the allele Eva1 that confers resistance to potato virus Y (PVY) by failing to interact with the viral VPg protein. This chain is Eukaryotic translation initiation factor 4E allele Eva1, found in Solanum etuberosum (Wild potato).